The chain runs to 298 residues: N-acetylmuramic acid 6-phosphate etherase (298 aa).

One can recognise an SIS domain in the interval 55-218; it reads IHAQVSGGGR…STGLMIKSGK (164 aa). Glutamate 83 serves as the catalytic Proton donor. Glutamate 114 is a catalytic residue.

It belongs to the GCKR-like family. MurNAc-6-P etherase subfamily. In terms of assembly, homodimer.

It carries out the reaction N-acetyl-D-muramate 6-phosphate + H2O = N-acetyl-D-glucosamine 6-phosphate + (R)-lactate. It participates in amino-sugar metabolism; 1,6-anhydro-N-acetylmuramate degradation. The protein operates within amino-sugar metabolism; N-acetylmuramate degradation. It functions in the pathway cell wall biogenesis; peptidoglycan recycling. Functionally, specifically catalyzes the cleavage of the D-lactyl ether substituent of MurNAc 6-phosphate, producing GlcNAc 6-phosphate and D-lactate. Together with AnmK, is also required for the utilization of anhydro-N-acetylmuramic acid (anhMurNAc) either imported from the medium or derived from its own cell wall murein, and thus plays a role in cell wall recycling. In Escherichia coli O7:K1 (strain IAI39 / ExPEC), this protein is N-acetylmuramic acid 6-phosphate etherase.